A 327-amino-acid polypeptide reads, in one-letter code: Methionyl-tRNA formyltransferase (327 aa).

122-125 (SLLP) contributes to the (6S)-5,6,7,8-tetrahydrofolate binding site.

This sequence belongs to the Fmt family.

It carries out the reaction L-methionyl-tRNA(fMet) + (6R)-10-formyltetrahydrofolate = N-formyl-L-methionyl-tRNA(fMet) + (6S)-5,6,7,8-tetrahydrofolate + H(+). Attaches a formyl group to the free amino group of methionyl-tRNA(fMet). The formyl group appears to play a dual role in the initiator identity of N-formylmethionyl-tRNA by promoting its recognition by IF2 and preventing the misappropriation of this tRNA by the elongation apparatus. The chain is Methionyl-tRNA formyltransferase from Ralstonia pickettii (strain 12J).